Consider the following 67-residue polypeptide: Large ribosomal subunit protein bL35 (67 aa).

The protein belongs to the bacterial ribosomal protein bL35 family.

In Picosynechococcus sp. (strain ATCC 27264 / PCC 7002 / PR-6) (Agmenellum quadruplicatum), this protein is Large ribosomal subunit protein bL35.